We begin with the raw amino-acid sequence, 520 residues long: Protein root UVB sensitive 4 (520 aa).

2 helical membrane-spanning segments follow: residues 275–295 (IQTV…NMLF) and 301–321 (LQAC…LLGI).

This sequence belongs to the RUS1 family.

The protein localises to the membrane. This chain is Protein root UVB sensitive 4, found in Arabidopsis thaliana (Mouse-ear cress).